The following is a 315-amino-acid chain: Lipase 3 (315 aa).

Positions 1 to 18 (MLLKRLGLAALFSLSMVG) are cleaved as a signal peptide. C19 carries the N-palmitoyl cysteine lipid modification. C19 carries S-diacylglycerol cysteine lipidation. The AB hydrolase-1 domain occupies 69-296 (PLLLIHGFGG…MNDVGHVPMV (228 aa)). H74 is a catalytic residue. Catalysis depends on S142, which acts as the Charge relay system.

Belongs to the lipase/esterase LIP3/BchO family.

It is found in the cell membrane. The enzyme catalyses a triacylglycerol + H2O = a diacylglycerol + a fatty acid + H(+). The polypeptide is Lipase 3 (lip3) (Moraxella sp. (strain TA144)).